Here is a 329-residue protein sequence, read N- to C-terminus: GTPase Obg (329 aa).

The 159-residue stretch at 1–159 (MQFIDQARIT…WLLHLELKLL (159 aa)) folds into the Obg domain. The OBG-type G domain maps to 160–328 (AEVGIIGLPN…LLNKIWSKLE (169 aa)). ATP contacts are provided by residues 166 to 173 (GLPNAGKS), 191 to 195 (FTTLI), 213 to 216 (DIPG), 280 to 283 (NKKE), and 309 to 311 (SAI). Ser-173 and Thr-193 together coordinate Mg(2+).

It belongs to the TRAFAC class OBG-HflX-like GTPase superfamily. OBG GTPase family. As to quaternary structure, monomer. Mg(2+) serves as cofactor.

It localises to the cytoplasm. Functionally, an essential GTPase which binds GTP, GDP and possibly (p)ppGpp with moderate affinity, with high nucleotide exchange rates and a fairly low GTP hydrolysis rate. Plays a role in control of the cell cycle, stress response, ribosome biogenesis and in those bacteria that undergo differentiation, in morphogenesis control. In Prochlorococcus marinus (strain SARG / CCMP1375 / SS120), this protein is GTPase Obg.